The following is a 114-amino-acid chain: Probable acid stress chaperone HdeA (114 aa).

A signal peptide spans methionine 1–alanine 26. A disulfide bridge connects residues cysteine 46 and cysteine 94.

It belongs to the HdeA family.

The protein localises to the periplasm. Functionally, required for optimal acid stress protection. Exhibits a chaperone-like activity only at low pH by suppressing non-specifically the aggregation of denaturated periplasmic proteins. This Brucella suis biovar 1 (strain 1330) protein is Probable acid stress chaperone HdeA.